A 466-amino-acid polypeptide reads, in one-letter code: Vimentin (466 aa).

Low complexity predominate over residues 1–13 (MSTRSVSSSSYRR). Positions 1–31 (MSTRSVSSSSYRRMFGGPGTASRPSSTRSYV) are disordered. Residue Ser2 is modified to N-acetylserine. Residues 2 to 95 (STRSVSSSSY…FSLADAINTE (94 aa)) are head. Ser5 is modified (phosphoserine). Ser7 carries the phosphoserine; by PKA and PKC; alternate modification. An O-linked (GlcNAc) serine; alternate glycan is attached at Ser7. Phosphoserine is present on Ser8. Phosphoserine; by PKC occurs at positions 9 and 10. A Phosphothreonine modification is found at Thr20. Ser25 is modified (phosphoserine; by PKA and PKC). Position 26 is a phosphoserine; by PKC (Ser26). O-linked (GlcNAc) threonine glycosylation is present at Thr33. An O-linked (GlcNAc) serine; alternate glycan is attached at Ser34. Ser34 is modified (phosphoserine; by PKC; alternate). Ser39 carries the post-translational modification Phosphoserine; by CaMK2, PKA, PKC and ROCK2. Ser42 carries the post-translational modification Phosphoserine; by PKC. Ser49 is modified (phosphoserine). Residue Tyr53 is modified to Phosphotyrosine. Ser55 bears the Phosphoserine mark. The residue at position 56 (Ser56) is a Phosphoserine; by CDK5 and CDK1. Tyr61 carries the post-translational modification Phosphotyrosine. A Phosphoserine; by PKA and PKC modification is found at Ser66. Ser72 is modified (phosphoserine; by AURKB and ROCK2). Ser83 is subject to Phosphoserine; by CaMK2. Position 87 is a phosphoserine (Ser87). The interval 96-131 (FKNTRTNEKVELQELNDRFANYIDKVRFLEQQNKIL) is coil 1A. The stretch at 96-131 (FKNTRTNEKVELQELNDRFANYIDKVRFLEQQNKIL) forms a coiled coil. In terms of domain architecture, IF rod spans 103 to 411 (EKVELQELND…KLLEGEESRI (309 aa)). Lys104 is covalently cross-linked (Glycyl lysine isopeptide (Lys-Gly) (interchain with G-Cter in SUMO2)). Tyr117 carries the phosphotyrosine modification. Lys120, Lys129, and Lys139 each carry N6-acetyllysine; alternate. N6-succinyllysine; alternate is present on residues Lys120 and Lys129. Residues Lys120, Lys129, and Lys139 each participate in a glycyl lysine isopeptide (Lys-Gly) (interchain with G-Cter in SUMO2); alternate cross-link. Residues 132–153 (LAELEQLKGQGKSRLGDLYEEE) form a linker 1 region. At Ser144 the chain carries Phosphoserine. A coiled-coil region spans residues 154 to 245 (MRELRRQVDQ…KLHDEEIQEL (92 aa)). The coil 1B stretch occupies residues 154–245 (MRELRRQVDQ…KLHDEEIQEL (92 aa)). Lys168 carries the N6-acetyllysine modification. Lys188 carries the N6-acetyllysine; alternate modification. Lys188 is modified (N6-succinyllysine; alternate). Ser214 is modified (phosphoserine). Lys223 bears the N6-acetyllysine; alternate mark. Lys223 participates in a covalent cross-link: Glycyl lysine isopeptide (Lys-Gly) (interchain with G-Cter in SUMO2); alternate. The residue at position 226 (Ser226) is a Phosphoserine. Lys235 bears the N6-acetyllysine mark. The linker 12 stretch occupies residues 246–268 (QAQIQEQHVQIDMDVSKPDLTAA). Lys262 participates in a covalent cross-link: Glycyl lysine isopeptide (Lys-Gly) (interchain with G-Cter in SUMO2). Residues 269–407 (LRDVRQQYES…ATYRKLLEGE (139 aa)) are coil 2. The residue at position 294 (Lys294) is an N6-acetyllysine; alternate. Residue Lys294 is modified to N6-succinyllysine; alternate. Lys294 participates in a covalent cross-link: Glycyl lysine isopeptide (Lys-Gly) (interchain with G-Cter in SUMO2); alternate. At Ser299 the chain carries Phosphoserine. Positions 303–407 (NRNNDALRQA…ATYRKLLEGE (105 aa)) form a coiled coil. A Glycyl lysine isopeptide (Lys-Gly) (interchain with G-Cter in SUMO2) cross-link involves residue Lys313. The [IL]-x-C-x-x-[DE] motif signature appears at 326–329 (LTCE). At Lys373 the chain carries N6-acetyllysine; alternate. A Glycyl lysine isopeptide (Lys-Gly) (interchain with G-Cter in SUMO2); alternate cross-link involves residue Lys373. Positions 408–466 (ESRISLPLPNFSSLNLRETNLDSLPLVDTHSKRTLLIKTVETRDGQVINETSQHHDDLE) are tail. 4 positions are modified to phosphoserine: Ser409, Ser412, Ser419, and Ser420. Position 426 is a phosphothreonine (Thr426). Position 430 is a phosphoserine (Ser430). Position 436 is a phosphothreonine (Thr436). Ser438 is subject to Phosphoserine. Residue Lys439 forms a Glycyl lysine isopeptide (Lys-Gly) (interchain with G-Cter in SUMO2) linkage. At Lys445 the chain carries N6-acetyllysine; alternate. Lys445 carries the post-translational modification N6-succinyllysine; alternate. A Glycyl lysine isopeptide (Lys-Gly) (interchain with G-Cter in SUMO2); alternate cross-link involves residue Lys445. A Glycyl lysine isopeptide (Lys-Gly) (interchain with G-Cter in SUMO1); alternate cross-link involves residue Lys445. 2 positions are modified to phosphothreonine: Thr446 and Thr458. Ser459 carries the post-translational modification Phosphoserine.

The protein belongs to the intermediate filament family. In terms of assembly, homomer assembled from elementary dimers. Identified in complexes that contain VIM, EZR, AHNAK, BFSP1, BFSP2, ANK2, PLEC, PRX and spectrin. Interacts with BCAS3. Interacts with LGSN. Interacts with SYNM. Interacts (via rod region) with PLEC (via CH 1 domain). Interacts with STK33. Interacts with LARP6. Interacts with RAB8B. Interacts with TOR1A; the interaction associates TOR1A with the cytoskeleton. Interacts with TOR1AIP1. Interacts with TOR1AIP1. Interacts with DIAPH1. Interacts with EPPK1; interaction is dependent of higher-order structure of intermediate filament. Interacts with the non-receptor tyrosine kinase SRMS; the interaction leads to phosphorylation of VIM. Interacts with NOD2. Interacts (via head region) with CORO1C. Interacts with HDGF. Interacts with PRKCE (via phorbol-ester/DAG-type 2 domain). Interacts with BFSP2. Interacts with PPL. Interacts with PKP1 and PKP2. Interacts with SCRIB (via PDZ domains); the interaction protects SCRIB from proteasomal degradation and facilitates SCRIB localization to intermediate filaments, the interaction is reduced by cell contact inhibition. Post-translationally, one of the most prominent phosphoproteins in various cells of mesenchymal origin. Phosphorylation is enhanced during cell division, at which time vimentin filaments are significantly reorganized. Phosphorylation by PKN1 inhibits the formation of filaments. Filament disassembly during mitosis is promoted by phosphorylation at Ser-55 as well as by nestin. Phosphorylated at Ser-56 by CDK5 during neutrophil secretion in the cytoplasm. Phosphorylated by STK33. Phosphorylated on tyrosine residues by SRMS. In terms of processing, S-nitrosylation is induced by interferon-gamma and oxidatively-modified low-densitity lipoprotein (LDL(ox)) possibly implicating the iNOS-S100A8/9 transnitrosylase complex.

It localises to the cytoplasm. Its subcellular location is the cytoskeleton. The protein resides in the nucleus matrix. The protein localises to the cell membrane. Functionally, vimentins are class-III intermediate filaments found in various non-epithelial cells, especially mesenchymal cells. Vimentin is attached to the nucleus, endoplasmic reticulum, and mitochondria, either laterally or terminally. Plays a role in cell directional movement, orientation, cell sheet organization and Golgi complex polarization at the cell migration front. Protects SCRIB from proteasomal degradation and facilitates its localization to intermediate filaments in a cell contact-mediated manner. In terms of biological role, involved with LARP6 in the stabilization of type I collagen mRNAs for CO1A1 and CO1A2. The sequence is that of Vimentin (VIM) from Bos taurus (Bovine).